A 150-amino-acid polypeptide reads, in one-letter code: Large ribosomal subunit protein uL15 (150 aa).

Residues 1–52 (MDLSNLKPAEGSVRKNSKRIGRGEGSGKGGTATRGHKGAKSRSGYSKKIGFE) form a disordered region. The segment covering 23-32 (GEGSGKGGTA) has biased composition (gly residues).

The protein belongs to the universal ribosomal protein uL15 family. In terms of assembly, part of the 50S ribosomal subunit.

Its function is as follows. Binds to the 23S rRNA. In Christiangramia forsetii (strain DSM 17595 / CGMCC 1.15422 / KT0803) (Gramella forsetii), this protein is Large ribosomal subunit protein uL15.